Reading from the N-terminus, the 154-residue chain is Protein E6 (154 aa).

2 zinc fingers span residues cysteine 30–cysteine 66 and cysteine 103–cysteine 139.

It belongs to the papillomaviridae E6 protein family. Forms homodimers. Interacts with ubiquitin-protein ligase UBE3A/E6-AP; this interaction stimulates UBE3A ubiquitin activity. Interacts with host TP53 and EP300; this interaction inhibits TP53 activity.

Its subcellular location is the host cytoplasm. The protein localises to the host nucleus. Plays a major role in the induction and maintenance of cellular transformation. E6 associates with host UBE3A/E6-AP ubiquitin-protein ligase and modulates its activity. Sequesters tumor suppressor TP53 in the host cytoplasm and modulates its activity by interacting with host EP300 that results in the reduction of TP53 acetylation and activation. In turn, apoptosis induced by DNA damage is inhibited. E6 also protects host keratinocytes from apoptosis by mediating the degradation of host BAK1. May also inhibit host immune response. The sequence is that of Protein E6 from Homo sapiens (Human).